The chain runs to 472 residues: 3-isopropylmalate dehydratase large subunit (472 aa).

Positions 352, 413, and 416 each coordinate [4Fe-4S] cluster.

It belongs to the aconitase/IPM isomerase family. LeuC type 1 subfamily. As to quaternary structure, heterodimer of LeuC and LeuD. [4Fe-4S] cluster serves as cofactor.

The enzyme catalyses (2R,3S)-3-isopropylmalate = (2S)-2-isopropylmalate. It functions in the pathway amino-acid biosynthesis; L-leucine biosynthesis; L-leucine from 3-methyl-2-oxobutanoate: step 2/4. Catalyzes the isomerization between 2-isopropylmalate and 3-isopropylmalate, via the formation of 2-isopropylmaleate. This chain is 3-isopropylmalate dehydratase large subunit, found in Pseudomonas fluorescens (strain ATCC BAA-477 / NRRL B-23932 / Pf-5).